The following is a 498-amino-acid chain: MMVAWWSLFLYGLQVAAPALAATPADWRSQSIYFLLTDRFARTDGSTTATCNTADQKYCGGTWQGIIDKLDYIQGMGFTAIWITPVTAQLPQTTAYGDAYHGYWQQDIYSLNENYGTADDLKALSSALHERGMYLMVDVVANHMGYDGAGSSVDYSVFKPFSSQDYFHPFCFIQNYEDQTQVEDCWLGDNTVSLPDLDTTKDVVKNEWYDWVGSLVSNYSIDGLRIDTVKHVQKDFWPGYNKAAGVYCIGEVLDGDPAYTCPYQNVMDGVLNYPIYYPLLNAFKSTSGSMDDLYNMINTVKSDCPDSTLLGTFVENHDNPRFASYTNDIALAKNVAAFIILNDGIPIIYAGQEQHYAGGNDPANREATWLSGYPTDSELYKLIASRNAIRNYAISKDTGFVTYKNWPIYKDDTTIPMRKGTDGSQIVTILSNKGASGDSYTLSLSGAGYTAGQQLTEVIGCTTVTVGSDGNVPVPMAGGLPRVLYPTEKLAGSKICYG.

Positions 1-21 are cleaved as a signal peptide; it reads MMVAWWSLFLYGLQVAAPALA. Cysteines 51 and 59 form a disulfide. Substrate is bound by residues Gln56 and Trp104. Position 142 (Asn142) interacts with Ca(2+). His143 is a substrate binding site. Cys171 and Cys185 are oxidised to a cystine. Ca(2+) contacts are provided by Glu183 and Asp196. A glycan (N-linked (GlcNAc...) asparagine) is linked at Asn218. Arg225 is a binding site for substrate. Residues Asp227, His231, and Glu251 each contribute to the Ca(2+) site. The Nucleophile role is filled by Asp227. Residue 230-231 coordinates substrate; that stretch reads KH. The Proton donor role is filled by Glu251. Gly255 contacts substrate. Cys261 and Cys304 are oxidised to a cystine. 2 residues coordinate substrate: Asp318 and Arg365. An intrachain disulfide couples Cys461 to Cys496.

The protein belongs to the glycosyl hydrolase 13 family. Ca(2+) is required as a cofactor.

The enzyme catalyses Endohydrolysis of (1-&gt;4)-alpha-D-glucosidic linkages in polysaccharides containing three or more (1-&gt;4)-alpha-linked D-glucose units.. This chain is Alpha-amylase A (amyA), found in Aspergillus awamori (Black koji mold).